A 189-amino-acid chain; its full sequence is Large ribosomal subunit protein bL17 (189 aa).

Residues 126 to 189 (DRARRVKASQ…DADADEAPQN (64 aa)) are disordered. Low complexity predominate over residues 139-180 (QDAPSEPQAAEEPAAEEAVAATEAVAAPADAEATDAEAGSAD).

Belongs to the bacterial ribosomal protein bL17 family. Part of the 50S ribosomal subunit. Contacts protein L32.

The chain is Large ribosomal subunit protein bL17 from Mycobacterium marinum (strain ATCC BAA-535 / M).